Consider the following 144-residue polypeptide: Large ribosomal subunit protein uL15 (144 aa).

The tract at residues 1-51 (MRLNTLSPAEGAKHSAKRLGRGIGSGLGKTGGRGHKGQKSRTGGKVRRGFE) is disordered. Residues 21-31 (RGIGSGLGKTG) show a composition bias toward gly residues. Residues 32-47 (GRGHKGQKSRTGGKVR) are compositionally biased toward basic residues.

This sequence belongs to the universal ribosomal protein uL15 family. In terms of assembly, part of the 50S ribosomal subunit.

Its function is as follows. Binds to the 23S rRNA. In Actinobacillus succinogenes (strain ATCC 55618 / DSM 22257 / CCUG 43843 / 130Z), this protein is Large ribosomal subunit protein uL15.